The primary structure comprises 224 residues: Phosphoglycolate phosphatase (224 aa).

Residue Asp-11 is the Nucleophile of the active site. Asp-11, Asp-13, and Asp-177 together coordinate Mg(2+).

The protein belongs to the HAD-like hydrolase superfamily. CbbY/CbbZ/Gph/YieH family. The cofactor is Mg(2+).

It carries out the reaction 2-phosphoglycolate + H2O = glycolate + phosphate. It participates in organic acid metabolism; glycolate biosynthesis; glycolate from 2-phosphoglycolate: step 1/1. In terms of biological role, specifically catalyzes the dephosphorylation of 2-phosphoglycolate. Is involved in the dissimilation of the intracellular 2-phosphoglycolate formed during the DNA repair of 3'-phosphoglycolate ends, a major class of DNA lesions induced by oxidative stress. This is Phosphoglycolate phosphatase from Haemophilus influenzae (strain ATCC 51907 / DSM 11121 / KW20 / Rd).